We begin with the raw amino-acid sequence, 600 residues long: Aspartate--tRNA(Asp/Asn) ligase (600 aa).

Residue Glu181 participates in L-aspartate binding. Residues Gln205 to Lys208 are aspartate. Arg227 contacts L-aspartate. ATP contacts are provided by residues Arg227 to Glu229 and Gln236. L-aspartate is bound at residue His455. Glu489 is an ATP binding site. Residue Arg496 coordinates L-aspartate. Gly541–Arg544 contributes to the ATP binding site.

This sequence belongs to the class-II aminoacyl-tRNA synthetase family. Type 1 subfamily. As to quaternary structure, homodimer.

The protein resides in the cytoplasm. The enzyme catalyses tRNA(Asx) + L-aspartate + ATP = L-aspartyl-tRNA(Asx) + AMP + diphosphate. In terms of biological role, aspartyl-tRNA synthetase with relaxed tRNA specificity since it is able to aspartylate not only its cognate tRNA(Asp) but also tRNA(Asn). Reaction proceeds in two steps: L-aspartate is first activated by ATP to form Asp-AMP and then transferred to the acceptor end of tRNA(Asp/Asn). This chain is Aspartate--tRNA(Asp/Asn) ligase, found in Rubrobacter xylanophilus (strain DSM 9941 / JCM 11954 / NBRC 16129 / PRD-1).